A 130-amino-acid chain; its full sequence is Large ribosomal subunit protein bL12 (130 aa).

This sequence belongs to the bacterial ribosomal protein bL12 family. Homodimer. Part of the ribosomal stalk of the 50S ribosomal subunit. Forms a multimeric L10(L12)X complex, where L10 forms an elongated spine to which 2 to 4 L12 dimers bind in a sequential fashion. Binds GTP-bound translation factors.

Forms part of the ribosomal stalk which helps the ribosome interact with GTP-bound translation factors. Is thus essential for accurate translation. In Cutibacterium acnes (strain DSM 16379 / KPA171202) (Propionibacterium acnes), this protein is Large ribosomal subunit protein bL12.